Here is a 514-residue protein sequence, read N- to C-terminus: Pantothenate transporter liz1 (514 aa).

The next 12 membrane-spanning stretches (helical) occupy residues 24–44 (LLIKIDWFILSYCCVSYFINY), 72–92 (INVVFTCGYIIGQLPGSYALQ), 98–118 (LWFSVMNILWGLMTIFSFAVH), 128–148 (FFMAVAEASTFAGTHYILGAW), 159–179 (GIFSASGLVGTMFAGYLQTAV), 194–214 (WLFIIDGILTIPLSLYGLFLF), 263–283 (GLCILWIFSGETQAIAVNVLM), 300–320 (NYPTVITAVGVVSTLGASVIS), 329–349 (WPFGLFLCVITTVSATILLAW), 357–377 (FFAYFASGCTYAGQAVWFSWA), 390–410 (VVVFLMNMCQNIWHIWWAPIM), and 423–443 (LIGLLVVGGIVFVSSCIVSYM).

The protein belongs to the major facilitator superfamily. Allantoate permease family.

Its subcellular location is the cell membrane. Functionally, transports pantothenate into the cell. The polypeptide is Pantothenate transporter liz1 (liz1) (Schizosaccharomyces pombe (strain 972 / ATCC 24843) (Fission yeast)).